Reading from the N-terminus, the 529-residue chain is Zinc finger protein 572 (529 aa).

A disordered region spans residues Met1–Ser125. Lys6 is covalently cross-linked (Glycyl lysine isopeptide (Lys-Gly) (interchain with G-Cter in SUMO2)). A compositionally biased stretch (polar residues) spans Lys22 to Ser42. A compositionally biased stretch (basic and acidic residues) spans Lys43–Glu68. Over residues Asn87–Asn96 the composition is skewed to polar residues. 12 C2H2-type zinc fingers span residues Tyr131–His153, Tyr159–His181, Tyr187–His209, Tyr215–His237, Tyr243–His265, Tyr271–His293, Tyr299–His321, Tyr327–His349, Tyr383–His405, Tyr411–His433, Tyr439–His461, and Tyr467–His489.

This sequence belongs to the krueppel C2H2-type zinc-finger protein family.

The protein localises to the nucleus. Its function is as follows. May be involved in transcriptional regulation. This chain is Zinc finger protein 572 (ZNF572), found in Bos taurus (Bovine).